We begin with the raw amino-acid sequence, 363 residues long: Adenosine deaminase (363 aa).

Positions 42 and 44 each coordinate Zn(2+). A purine D-ribonucleoside is bound by residues 44-46, Asp-172, and Gly-201; that span reads HLD. A gating helix loop; regulates binding affinity for substrates and thus substrate selectivity region spans residues 170-184; that stretch reads IGDTGHEAANIKASA. A Zn(2+)-binding site is contributed by His-226. Glu-229, His-253, and Asp-310 together coordinate a purine D-ribonucleoside. Asp-310 is a binding site for Zn(2+).

Belongs to the metallo-dependent hydrolases superfamily. Adenosine and AMP deaminases family. It depends on Zn(2+) as a cofactor.

The catalysed reaction is adenosine + H2O + H(+) = inosine + NH4(+). The enzyme catalyses S-methyl-5'-thioadenosine + H2O + H(+) = S-methyl-5'-thioinosine + NH4(+). It functions in the pathway purine metabolism; purine nucleoside salvage. Inhibited by coformycin and methylthiocoformycin (MT-coformycin). Catalyzes the hydrolytic deamination of adenosine to produce inosine. Unlike mammalian adenosine deaminases, also catalyzes the deamination of 5'-methylthioadenosine (MTA), a by-product of polyamine biosynthesis, to produce 5'-methylthioinosine (MTI). Plays an essential role in the purine salvage pathway which allows the parasite to use host cell purines for the synthesis of nucleic acids. This chain is Adenosine deaminase, found in Plasmodium cynomolgi (strain B).